The following is a 645-amino-acid chain: Sodium-dependent nutrient amino acid transporter 1 (645 aa).

Residues 1–48 (MELKTMPHNGANGSPQHNNNNNSNNNNNVSSDTKTDNNEKEAQKKDEG) are disordered. The Cytoplasmic portion of the chain corresponds to 1–51 (MELKTMPHNGANGSPQHNNNNNSNNNNNVSSDTKTDNNEKEAQKKDEGRTN). Low complexity predominate over residues 18-32 (NNNNNSNNNNNVSSD). Basic and acidic residues predominate over residues 33–48 (TKTDNNEKEAQKKDEG). Helical transmembrane passes span 52–72 (WSNGIEFLMSCISVSVGLGNV), 85–105 (GAFLIPYIIVLFLIGKPMYYL), and 138–158 (TICIITYYSSLLALTLYYLFV). 2 N-linked (GlcNAc...) asparagine glycosylation sites follow: Asn-191 and Asn-205. 7 consecutive transmembrane segments (helical) span residues 234-254 (IPDWKLTIALFVSWVVIFLVI), 264-284 (AAYFLALFPYVVLFALLGRAV), 313-333 (AVVQCFFSLAVGCGPIIMFAS), 347-367 (IVTTLDTLTSLLGGITIFAIL), 407-427 (LFSVLFFFMLFVLGIGSIVAL), 454-474 (CGFLMGLVYVTPGGQWILTLV), and 480-500 (TYVVFILAIFELSGIVWIYGL). Asn-514 carries N-linked (GlcNAc...) asparagine glycosylation. Helical transmembrane passes span 522–542 (CWSFFTPVMMIVIFIYSMATI) and 559–579 (AGWLLFAVGAAQFPLWGWWYI).

It belongs to the sodium:neurotransmitter symporter (SNF) (TC 2.A.22) family.

It localises to the membrane. In terms of biological role, unusual broad substrate spectrum amino acid:sodium cotransporter that promotes absorption of the D isomers of essential amino acids. Neutral amino acids are the preferred substrates, especially methionine and phenylalanine. The chain is Sodium-dependent nutrient amino acid transporter 1 from Drosophila mojavensis (Fruit fly).